The following is a 61-amino-acid chain: MLNIFSLICICLHSTLYSSSFFLAKLPEAYAFLNPIVDFMPVIPLLFFLLAFVWQAAVSFR.

Positions methionine 1 to alanine 24 are excised as a propeptide. The helical transmembrane segment at isoleucine 36–alanine 56 threads the bilayer.

It belongs to the PsbK family. In terms of assembly, PSII is composed of 1 copy each of membrane proteins PsbA, PsbB, PsbC, PsbD, PsbE, PsbF, PsbH, PsbI, PsbJ, PsbK, PsbL, PsbM, PsbT, PsbX, PsbY, PsbZ, Psb30/Ycf12, at least 3 peripheral proteins of the oxygen-evolving complex and a large number of cofactors. It forms dimeric complexes.

The protein resides in the plastid. It localises to the chloroplast thylakoid membrane. Its function is as follows. One of the components of the core complex of photosystem II (PSII). PSII is a light-driven water:plastoquinone oxidoreductase that uses light energy to abstract electrons from H(2)O, generating O(2) and a proton gradient subsequently used for ATP formation. It consists of a core antenna complex that captures photons, and an electron transfer chain that converts photonic excitation into a charge separation. In Eucalyptus globulus subsp. globulus (Tasmanian blue gum), this protein is Photosystem II reaction center protein K.